The following is a 329-amino-acid chain: Bifunctional muramidase/DL-endopeptidase CwlT (329 aa).

A signal peptide spans 1-29; it reads MISKKVVLPLVFSAPFIFFFVLCIVVVMT. A muramidase region spans residues 59 to 192; sequence RFRAVFEKYA…SYVDHVMRYV (134 aa). One can recognise a NlpC/P60 domain in the interval 206-329; sequence MDFYETVMKE…DHLVSFGRIK (124 aa). The Nucleophile role is filled by C237. H290 functions as the Proton acceptor in the catalytic mechanism. N302 is an active-site residue.

This sequence belongs to the peptidase C40 family.

The protein localises to the secreted. The catalysed reaction is Hydrolysis of (1-&gt;4)-beta-linkages between N-acetylmuramic acid and N-acetyl-D-glucosamine residues in a peptidoglycan and between N-acetyl-D-glucosamine residues in chitodextrins.. Exhibits both muramidase and DL-endopeptidase activities. The N-terminal region acts as a N-acetylmuramidase, which cleaves the bond between N-acetylmuramic acid and N-acetyl-D-glucosamine (MurNAc-GlcNAc) in peptidoglycan. The C-terminal region acts as a DL-endopeptidase that cleaves the bond between D-gamma-glutamate and meso-diaminopimelic acid. Cannot degrade purified B.anthracis peptidoglycan, which differ from those of B.subtilis. CwlT is required for ICEBs1 conjugation: the muramidase activity is essential, whereas the peptidase activity is partially dispensable for transfer of ICEBs1. In Bacillus subtilis (strain 168), this protein is Bifunctional muramidase/DL-endopeptidase CwlT.